The chain runs to 296 residues: Phosphatidylcholine:diacylglycerol cholinephosphotransferase 2 (296 aa).

The next 5 helical transmembrane spans lie at 83 to 103 (HWIP…EYTF), 136 to 156 (VLAA…GCTW), 165 to 182 (TIAA…GYST), 198 to 218 (PVGN…SMIA), and 250 to 270 (GHYT…DSLA). Catalysis depends on residues His211, His251, and Asp255.

Belongs to the phosphatidylcholine:diacylglycerol cholinephosphotransferase family.

It is found in the membrane. Its function is as follows. Functions as a phosphatidylcholine:diacylglycerol cholinephosphotransferase that catalyzes the transfer of the phosphocholine headgroup from phosphatidylcholine (PC) to diacylglycerol, a major reaction for the transfer of 18:1 into phosphatidylcholine for desaturation and also for the reverse transfer of 18:2 and 18:3 into the triacylglycerols synthesis pathway. In Arabidopsis thaliana (Mouse-ear cress), this protein is Phosphatidylcholine:diacylglycerol cholinephosphotransferase 2.